Reading from the N-terminus, the 172-residue chain is UPF0316 protein Clos_0555 (172 aa).

Transmembrane regions (helical) follow at residues 3 to 23 (ALLG…MATI), 34 to 54 (VIAA…IGKV), and 61 to 81 (PLNV…GIFL).

This sequence belongs to the UPF0316 family.

It is found in the cell membrane. The polypeptide is UPF0316 protein Clos_0555 (Alkaliphilus oremlandii (strain OhILAs) (Clostridium oremlandii (strain OhILAs))).